The chain runs to 283 residues: 4-diphosphocytidyl-2-C-methyl-D-erythritol kinase (283 aa).

Lys-9 is an active-site residue. Residue Pro-93–Ser-103 participates in ATP binding. Residue Asp-135 is part of the active site.

Belongs to the GHMP kinase family. IspE subfamily.

The enzyme catalyses 4-CDP-2-C-methyl-D-erythritol + ATP = 4-CDP-2-C-methyl-D-erythritol 2-phosphate + ADP + H(+). The protein operates within isoprenoid biosynthesis; isopentenyl diphosphate biosynthesis via DXP pathway; isopentenyl diphosphate from 1-deoxy-D-xylulose 5-phosphate: step 3/6. In terms of biological role, catalyzes the phosphorylation of the position 2 hydroxy group of 4-diphosphocytidyl-2C-methyl-D-erythritol. The polypeptide is 4-diphosphocytidyl-2-C-methyl-D-erythritol kinase (Macrococcus caseolyticus (strain JCSC5402) (Macrococcoides caseolyticum)).